The chain runs to 335 residues: Nucleoid-associated protein SeAg_B2375 (335 aa).

The protein belongs to the YejK family.

The protein localises to the cytoplasm. It localises to the nucleoid. The sequence is that of Nucleoid-associated protein SeAg_B2375 from Salmonella agona (strain SL483).